The following is a 371-amino-acid chain: Trans-enoyl reductase mycC (371 aa).

51-54 is a binding site for NADP(+); it reads CDWK. 140–147 lines the substrate pocket; it reads CVVGTVGL. NADP(+) contacts are provided by residues 182 to 185, 205 to 208, Y223, and 270 to 271; these read STAS, SPAN, and FE. 291–295 is a binding site for substrate; it reads GIRLL. 361–362 contributes to the NADP(+) binding site; sequence VS.

Belongs to the zinc-containing alcohol dehydrogenase family. In terms of assembly, monomer.

It carries out the reaction L-leucine + 8 malonyl-CoA + 4 S-adenosyl-L-methionine + ATP + 9 NADPH + 12 H(+) = (5S)-5-(2-methylpropyl)-3-[(2E,6R,8E,10E,12E)-6,8,10,12-tetramethyltetradeca-2,8,10,12-tetraenoyl]-2,5-dihydro-1H-pyrrol-2-one + AMP + 4 S-adenosyl-L-homocysteine + 8 CO2 + diphosphate + 9 NADP(+) + 8 CoA + 7 H2O. Its pathway is mycotoxin biosynthesis. In terms of biological role, trans-enoyl reductase; part of the gene cluster that mediates the biosynthesis of myceliothermophins, mycotoxins that contain a trans-fused decalin ring system connected to a conjugated 3-pyrrolin-2-one moiety and that have potential anti-tumor properties. The polyketide synthase module (PKS) of the PKS-NRPS mycA is responsible for the synthesis of the octaketide backbone. The downstream nonribosomal peptide synthetase (NRPS) module then amidates the carboxyl end of the octaketide with a leucine. A reductase-like domain (R) at the C-terminus catalyzes the reductive release of the polyketide-amino acid intermediate. Because mycA lacks a designated enoylreductase (ER) domain, the required activity is provided the enoyl reductase mycC. Following mycA-catalyzed construction and release of aminoacyl polyketide aldehyde, Knoevenagel condensation yields the expected ketone. This C18 keto acyclic precursor is the substrate of the Diels-Alderase mycB, that catalyzes the Diels-Alder cycloaddition to produce myceliothermophin E. A yet unknown oxygenase involved in the production of myceliothermophin A, via substitution with a hydroxyl group at the C21, has still to be identified. In Thermothelomyces thermophilus (strain ATCC 42464 / BCRC 31852 / DSM 1799) (Sporotrichum thermophile), this protein is Trans-enoyl reductase mycC.